We begin with the raw amino-acid sequence, 55 residues long: UPF0391 membrane protein Neut_2351/Neut_2360 (55 aa).

2 consecutive transmembrane segments (helical) span residues 4 to 24 (LAVVFLIIAVIAALLGVTGVA) and 28 to 48 (AEMAWILFVIGIVLAIVFWVL).

Belongs to the UPF0391 family.

Its subcellular location is the cell membrane. The sequence is that of UPF0391 membrane protein Neut_2351/Neut_2360 from Nitrosomonas eutropha (strain DSM 101675 / C91 / Nm57).